A 358-amino-acid chain; its full sequence is Alanine racemase (358 aa).

K35 (proton acceptor; specific for D-alanine) is an active-site residue. An N6-(pyridoxal phosphate)lysine modification is found at K35. Residue R130 participates in substrate binding. Y255 acts as the Proton acceptor; specific for L-alanine in catalysis. M303 contributes to the substrate binding site.

This sequence belongs to the alanine racemase family. Requires pyridoxal 5'-phosphate as cofactor.

The enzyme catalyses L-alanine = D-alanine. It functions in the pathway amino-acid biosynthesis; D-alanine biosynthesis; D-alanine from L-alanine: step 1/1. In terms of biological role, catalyzes the interconversion of L-alanine and D-alanine. May also act on other amino acids. The sequence is that of Alanine racemase (alr) from Shewanella sp. (strain MR-4).